We begin with the raw amino-acid sequence, 453 residues long: G-protein coupled receptor 39 (453 aa).

Topologically, residues 1-34 (MASPSLPGSDCSQIIDHSHVPEFEVATWIKITLI) are extracellular. Intrachain disulfides connect Cys-11/Cys-191 and Cys-108/Cys-210. Zn(2+)-binding residues include His-17 and His-19. Residues 35–55 (LVYLIIFVMGLLGNSATIRVT) form a helical membrane-spanning segment. Residues 56–69 (QVLQKKGYLQKEVT) are Cytoplasmic-facing. Residues 70-89 (DHMVSLACSDILVFLIGMPM) traverse the membrane as a helical segment. Residues 90–109 (EFYSIIWNPLTTSSYTLSCK) are Extracellular-facing. A helical transmembrane segment spans residues 110–131 (LHTFLFEACSYATLLHVLTLSF). Residues 132-151 (ERYIAICHPFRYKAVSGPCQ) are Cytoplasmic-facing. Residues 152 to 172 (VKLLIGFVWVTSALVALPLLF) form a helical membrane-spanning segment. The Extracellular portion of the chain corresponds to 173–217 (AMGTEYPLVNVPSHRGLTCNRSSTRHHEQPETSNMSICTNLSSRW). N-linked (GlcNAc...) asparagine glycosylation is found at Asn-192, Asn-206, and Asn-212. The chain crosses the membrane as a helical span at residues 218 to 242 (TVFQSSIFGAFVVYLVVLLSVAFMC). The Cytoplasmic portion of the chain corresponds to 243–283 (WNMMQVLMKSQKGSLAGGTRPPQLRKSESEESRTARRQTII). The interval 255-274 (GSLAGGTRPPQLRKSESEES) is disordered. A helical transmembrane segment spans residues 284 to 305 (FLRLIVVTLAVCWMPNQIRRIM). Residues 306-323 (AAAKPKHDWTRSYFRAYM) are Extracellular-facing. Residues 324–344 (ILLPFSETFFYLSSVINPLLY) traverse the membrane as a helical segment. The Cytoplasmic segment spans residues 345–453 (TVSSQQFRRV…AENGFQEHEV (109 aa)). Ser-396 carries the post-translational modification Phosphoserine. The disordered stretch occupies residues 415–453 (SEAEPQSKSQSLSLESLEPNSGAKPANSAAENGFQEHEV). Over residues 418–435 (EPQSKSQSLSLESLEPNS) the composition is skewed to low complexity.

This sequence belongs to the G-protein coupled receptor 1 family. As to quaternary structure, interacts with HTR1A. Interacts with GALR1. As to expression, expressed in many tissues, including the stomach, intestine and hypothalamus.

It localises to the cell membrane. In terms of biological role, zinc-sensing receptor that can sense changes in extracellular Zn(2+), mediate Zn(2+) signal transmission, and participates in the regulation of numerous physiological processes including glucose homeostasis regulation, gastrointestinal mobility, hormone secretion and cell death. Activation by Zn(2+) in keratinocytes increases the intracellular concentration of Ca(2+) and activates the ERK/MAPK and PI3K/AKT signaling pathways leading to epithelial repair. Plays an essential role in normal wound healing by inducing the production of cytokines including the major inflammatory cytokine IL6 via the PKC/MAPK/CEBPB pathway. Regulates adipose tissue metabolism, especially lipolysis, and regulates the function of lipases, such as hormone-sensitive lipase and adipose triglyceride lipase. Plays a role in the inhibition of cell death and protects against oxidative, endoplasmic reticulum and mitochondrial stress by inducing secretion of the cytoprotective pigment epithelium-derived growth factor (PEDF) and probably other protective transcripts in a GNA13/RHOA/SRE-dependent manner. Forms dynamic heteroreceptor complexes with HTR1A and GALR1 depending on cell type or specific physiological states, resulting in signaling diversity: HTR1A-GPR39 shows additive increase in signaling along the serum response element (SRE) and NF-kappa-B pathways while GALR1 acts as an antagonist blocking SRE. The sequence is that of G-protein coupled receptor 39 (GPR39) from Homo sapiens (Human).